We begin with the raw amino-acid sequence, 154 residues long: Deoxyuridine 5'-triphosphate nucleotidohydrolase (154 aa).

Residues 68 to 70, Asn81, and 85 to 87 each bind substrate; these read RSG and TID.

Belongs to the dUTPase family. It depends on Mg(2+) as a cofactor.

It carries out the reaction dUTP + H2O = dUMP + diphosphate + H(+). It functions in the pathway pyrimidine metabolism; dUMP biosynthesis; dUMP from dCTP (dUTP route): step 2/2. Functionally, this enzyme is involved in nucleotide metabolism: it produces dUMP, the immediate precursor of thymidine nucleotides and it decreases the intracellular concentration of dUTP so that uracil cannot be incorporated into DNA. The protein is Deoxyuridine 5'-triphosphate nucleotidohydrolase of Acidiphilium cryptum (strain JF-5).